Here is a 349-residue protein sequence, read N- to C-terminus: MIEFDNLTYLHGKPQGTGLLKANPEDFVVVEDLGFEPDGEGEHILVRILKNGCNTRFVADALAKFLKIHAREVSFAGQKDKHAVTEQWLCARVPGKEMPDLSAFQLEGCQVLEYARHKRKLRLGALKGNAFTLVLREVSNRDDVEQRLIDICVKGVPNYFGAQRFGIGGSNLQGALRWAQTNTPVRDRNKRSFWLSAARSALFNQIVAERLKKADVNQVVDGDALQLAGRGSWFVATTEELAELQRRVNDKELMITAALPGSGEWGTQREALAFEQAAVAAETELQALLVREKVEAARRAMLLYPQQFSWNWWDDVTVEIRFWLPAGSFATSVVRELINTTGDYAHIAE.

Phe-27 contributes to the substrate binding site. Asp-80 serves as the catalytic Nucleophile. Asn-129 is a binding site for substrate. One can recognise a TRUD domain in the interval 155-303; it reads GVPNYFGAQR…VEAARRAMLL (149 aa). Phe-329 lines the substrate pocket.

It belongs to the pseudouridine synthase TruD family.

It catalyses the reaction uridine(13) in tRNA = pseudouridine(13) in tRNA. Responsible for synthesis of pseudouridine from uracil-13 in transfer RNAs. This Escherichia coli O8 (strain IAI1) protein is tRNA pseudouridine synthase D.